The following is a 328-amino-acid chain: MKLLVLGTGGTIASAKTEMGYKAALSADDILQLAGIRREDGAKIETRDILNLDSTLIQPEDWVTIGRAVFEAFDEYDGIVITHGTDTLAYTSSALSFMIRNPPIPVVLTGSMLPITEPNSDAPRNLRTALTFARKGFPGIYVAFMDKIMLGTRVSKVHSLGLNAFQSINYPDIAYVKGDEVLVRHKPRIGNGEPLFDPELDPNVVHIRLTPGLSPEVLRAVARATDGIVLEGYGAGGIPYRGRNLLEVVSETAREKPVVMTTQALYGGVDLTRYEVGRRALEAGVIPAGDMTKEATLTKLMWALGHTRDLEEIRKIMERNIAGEITGS.

Residues 1–320 (MKLLVLGTGG…EEIRKIMERN (320 aa)) form the Asparaginase/glutaminase domain. Catalysis depends on T11, which acts as the Nucleophile; O-isoaspartyl threonine intermediate. The L-aspartate site is built by T11, D53, S54, T85, and D86. Active-site charge relay system residues include T85, D86, K156, and Y274.

This sequence belongs to the asparaginase 1 family. In terms of assembly, homodimer.

It carries out the reaction L-asparagine + H2O = L-aspartate + NH4(+). With respect to regulation, chohan et al. found that divalent metal ions and EDTA do not have any significant effect on enzyme activity, indicating that activity is independent of metal ions. In another study, Hong et al. showed that activity is enhanced by Mg(2+), significantly inhibited by Co(2+) and Ni(2+), and moderately inhibited by Ca(2+), Cu(2+) and EDTA. Unfolding studies suggest that urea cannot induce complete unfolding and inactivation of the enzyme even at a concentration 8 M. However, in the presence of 4 M guanidine hydrochloride, the enzyme structure is unfolded with complete loss of enzyme activity. In terms of biological role, catalyzes the hydrolysis of L-asparagine into L-aspartate and ammonia. Also displays D-asparaginase activity, which is about 50% of the L-asparaginase activity. Does not exhibit glutaminase activity. In Thermococcus kodakarensis (strain ATCC BAA-918 / JCM 12380 / KOD1) (Pyrococcus kodakaraensis (strain KOD1)), this protein is L-asparaginase.